The chain runs to 285 residues: E2F-associated phosphoprotein (285 aa).

The residue at position 1 (Met-1) is an N-acetylmethionine. The interval 1–30 (MNRLPDDYDPYAVEEPSDEEPALSSSEDEV) is disordered. Residues 15–30 (EPSDEEPALSSSEDEV) show a composition bias toward acidic residues. Ser-17 carries the post-translational modification Phosphoserine. Position 37 is a phosphothreonine (Thr-37). A disordered region spans residues 48-96 (CLTGESESSSEDEFEKEMEAELNSTMKTMEDKLSSLGTGSSSGNGKVAT). The segment covering 55-67 (SSSEDEFEKEMEA) has biased composition (acidic residues). Residues 81–92 (SSLGTGSSSGNG) are compositionally biased toward low complexity. 2 positions are modified to phosphoserine: Ser-109 and Ser-111. The disordered stretch occupies residues 118-144 (VQVTKKKKKKQHKIPTNDELLYDPEKD). Residues 121–130 (TKKKKKKQHK) are compositionally biased toward basic residues.

In terms of assembly, interacts with E2F1. The C-terminal half binds the N-terminal of E2F1. Also interacts with E2F2 and E2F3, but not E2F4. In terms of tissue distribution, ubiquitously expressed. Highest levels in heart, placenta, skeletal muscle and pancreas. Lower levels in brain, lung and kidney. In the brain, expressed in all regions with high levels in the cerebellum and cerebral cortex. Expressed in COS1 and transformed skin fibroblasts.

The protein localises to the cytoplasm. It is found in the nucleus. Functionally, may play an important role in the fine-tuning of both major E2F1 activities, the regulation of the cell-cycle and the induction of apoptosis. Promotes S-phase entry, and inhibits p14(ARP) expression. This chain is E2F-associated phosphoprotein (EAPP), found in Homo sapiens (Human).